The following is a 292-amino-acid chain: ATP synthase gamma chain (292 aa).

This sequence belongs to the ATPase gamma chain family. In terms of assembly, F-type ATPases have 2 components, CF(1) - the catalytic core - and CF(0) - the membrane proton channel. CF(1) has five subunits: alpha(3), beta(3), gamma(1), delta(1), epsilon(1). CF(0) has three main subunits: a, b and c.

The protein localises to the cell membrane. Its function is as follows. Produces ATP from ADP in the presence of a proton gradient across the membrane. The gamma chain is believed to be important in regulating ATPase activity and the flow of protons through the CF(0) complex. The polypeptide is ATP synthase gamma chain (Caldicellulosiruptor saccharolyticus (strain ATCC 43494 / DSM 8903 / Tp8T 6331)).